The following is a 1242-amino-acid chain: Structural polyprotein (1242 aa).

The segment at 14–101 is disordered; the sequence is WRPRMPPRPW…PKRKPGRRER (88 aa). The span at 26 to 42 shows a compositional bias: low complexity; it reads RMPTMQRPDQQARQMQQ. Residues 35–66 are host transcription inhibition; sequence QQARQMQQLIAAVSTLALRQNAAAPQRGKKKQ. Residues 59–96 carry the Nuclear localization signal motif; the sequence is PQRGKKKQPRRKKPKPQPEKPKKQEQKPKQKKAPKRKP. A compositionally biased stretch (basic residues) spans 61–73; it reads RGKKKQPRRKKPK. Positions 74 to 86 are enriched in basic and acidic residues; the sequence is PQPEKPKKQEQKP. Positions 82–111 are binding to the viral RNA; the sequence is QEQKPKQKKAPKRKPGRRERMCMKIEHDCI. Positions 87-98 are enriched in basic residues; that stretch reads KQKKAPKRKPGR. Residues 96–110 form a ribosome-binding region; that stretch reads PGRRERMCMKIEHDC. Cysteines 110 and 125 form a disulfide. The Peptidase S3 domain occupies 110-258; the sequence is CIFEVKHEGK…KITPEGTVEW (149 aa). Residue histidine 136 is the Charge relay system of the active site. Residues 141–151 carry the Nuclear export signal motif; the sequence is IDNADLARLSY. The interaction with spike glycoprotein E2 stretch occupies residues 152–157; that stretch reads KKSSKY. Aspartate 158 (charge relay system) is an active-site residue. The dimerization of the capsid protein stretch occupies residues 180-190; it reads PEGHYNWHYGA. Catalysis depends on serine 210, which acts as the Charge relay system. The interval 216-220 is dimerization of the capsid protein; it reads DNKGP. Positions 259–272 are functions as an uncleaved signal peptide for the precursor of protein E3/E2; that stretch reads AASTVTAMCLLTNI. Cystine bridges form between cysteine 267-cysteine 276, cysteine 281-cysteine 285, cysteine 284-cysteine 316, cysteine 343-cysteine 449, cysteine 346-cysteine 352, cysteine 415-cysteine 429, cysteine 477-cysteine 589, and cysteine 527-cysteine 544. Asparagine 271 carries N-linked (GlcNAc...) asparagine; by host glycosylation. Over 325 to 690 the chain is Extracellular; that stretch reads STANHFNAYK…YYYGLHPTTT (366 aa). Interaction with host Mxra8 receptor regions lie at residues 350–353 and 386–388; these read HSCH and HDH. 2 interaction with host Mxra8 receptor regions span residues 508 to 511 and 540 to 546; these read QSGN and TINSCTV. Asparagine 586 is a glycosylation site (N-linked (GlcNAc...) asparagine; by host). A helical transmembrane segment spans residues 691 to 711; that stretch reads IVVVIRVSVVVLLSFAASVYM. Over 712-746 the chain is Cytoplasmic; that stretch reads CVVARTKCLTPYALTPGAVVPVTIGVLCCAPKAHA. The segment at 714 to 718 is interaction with the capsid protein; that stretch reads VARTK. 3 S-palmitoyl cysteine; by host lipidation sites follow: cysteine 719, cysteine 739, and cysteine 740. The interval 719–739 is transient transmembrane before p62-6K protein processing; that stretch reads CLTPYALTPGAVVPVTIGVLC. The cysteines at positions 719 and 740 are disulfide-linked. The Extracellular segment spans residues 747–761; that stretch reads ASFAEGMAYLWDNNQ. N-linked (GlcNAc...) asparagine; by host glycosylation occurs at asparagine 760. The chain crosses the membrane as a helical span at residues 762-782; that stretch reads SMFWMELTGPLALLILATCCA. The Cytoplasmic portion of the chain corresponds to 783-785; the sequence is RSL. The chain crosses the membrane as a helical span at residues 786–806; it reads LSCCKGSFLVAMSIGSAVASA. Residues 807-1217 lie on the Extracellular side of the membrane; sequence YEHTAIIPNQ…STAMTWAQHL (411 aa). 4 disulfides stabilise this stretch: cysteine 855–cysteine 920, cysteine 868–cysteine 900, cysteine 869–cysteine 902, and cysteine 874–cysteine 884. The segment at 890-907 is E1 fusion peptide loop; the sequence is VYPFMWGGAYCFCDSENT. 2 N-linked (GlcNAc...) asparagine; by host glycosylation sites follow: asparagine 947 and asparagine 1076. 4 cysteine pairs are disulfide-bonded: cysteine 1065–cysteine 1077, cysteine 1107–cysteine 1180, cysteine 1112–cysteine 1184, and cysteine 1134–cysteine 1174. The chain crosses the membrane as a helical span at residues 1218–1238; that stretch reads AGGVGLLIALAVLILVIVTCV. Cysteine 1237 carries the S-palmitoyl cysteine; by host lipid modification. The Cytoplasmic portion of the chain corresponds to 1239–1242; that stretch reads TLRR.

Homodimer. Homomultimer. Interacts with host karyopherin KPNA4; this interaction allows the nuclear import of the viral capsid protein. Interacts with spike glycoprotein E2. Interacts with host IRAK1; the interaction leads to inhibition of IRAK1-dependent signaling. In terms of assembly, the precursor of protein E3/E2 and E1 form a heterodimer shortly after synthesis. As to quaternary structure, the precursor of protein E3/E2 and E1 form a heterodimer shortly after synthesis. Processing of the precursor of protein E3/E2 into E2 and E3 results in a heterodimer of the spike glycoproteins E2 and E1. Spike at virion surface are constituted of a trimer of E2-E1 heterodimers. After target cell attachment and endocytosis, E1 change conformation to form homotrimers. Interacts with 6K protein. Interacts with spike glycoprotein E1. Processing of the precursor of protein E3/E2 into E2 and E3 results in a heterodimer of the spike glycoproteins E2 and E1. Spike at virion surface are constituted of a trimer of E2-E1 heterodimers. Interacts with 6K protein. Interacts with host MXRA8; this interaction mediates virus entry. In terms of assembly, oligomer. Interacts with spike glycoprotein E1. Interacts with spike glycoprotein E2. Post-translationally, structural polyprotein: Specific enzymatic cleavages in vivo yield mature proteins. Capsid protein is auto-cleaved during polyprotein translation, unmasking a signal peptide at the N-terminus of the precursor of E3/E2. The remaining polyprotein is then targeted to the host endoplasmic reticulum, where host signal peptidase cleaves it into pE2, 6K and E1 proteins. pE2 is further processed to mature E3 and E2 by host furin in trans-Golgi vesicle. Palmitoylated via thioester bonds. These palmitoylations may induce disruption of the C-terminus transmembrane. This would result in the reorientation of E2 C-terminus from lumenal to cytoplasmic side. In terms of processing, N-glycosylated. Post-translationally, palmitoylated via thioester bonds.

The protein localises to the virion. Its subcellular location is the host cytoplasm. The protein resides in the host cell membrane. It is found in the host nucleus. It localises to the virion membrane. The protein localises to the host Golgi apparatus. Its subcellular location is the host trans-Golgi network. The protein resides in the host endoplasmic reticulum. The catalysed reaction is Autocatalytic release of the core protein from the N-terminus of the togavirus structural polyprotein by hydrolysis of a -Trp-|-Ser- bond.. Forms an icosahedral capsid with a T=4 symmetry composed of 240 copies of the capsid protein surrounded by a lipid membrane through which penetrate 80 spikes composed of trimers of E1-E2 heterodimers. The capsid protein binds to the viral RNA genome at a site adjacent to a ribosome binding site for viral genome translation following genome release. Possesses a protease activity that results in its autocatalytic cleavage from the nascent structural protein. Following its self-cleavage, the capsid protein transiently associates with ribosomes, and within several minutes the protein binds to viral RNA and rapidly assembles into icosahedric core particles. The resulting nucleocapsid eventually associates with the cytoplasmic domain of the spike glycoprotein E2 at the cell membrane, leading to budding and formation of mature virions. In case of infection, new virions attach to target cells and after clathrin-mediated endocytosis their membrane fuses with the host endosomal membrane. This leads to the release of the nucleocapsid into the cytoplasm, followed by an uncoating event necessary for the genomic RNA to become accessible. The uncoating might be triggered by the interaction of capsid proteins with ribosomes. Binding of ribosomes would release the genomic RNA since the same region is genomic RNA-binding and ribosome-binding. Specifically inhibits interleukin-1 receptor-associated kinase 1/IRAK1-dependent signaling during viral entry, representing a means by which the alphaviruses may evade innate immune detection and activation prior to viral gene expression. Its function is as follows. Provides the signal sequence for the translocation of the precursor of protein E3/E2 to the host endoplasmic reticulum. Furin-cleaved E3 remains associated with spike glycoprotein E1 and mediates pH protection of the latter during the transport via the secretory pathway. After virion release from the host cell, the assembly protein E3 is gradually released in the extracellular space. Functionally, plays a role in viral attachment to target host cell, by binding to the cell receptor MXRA8. Synthesized as a p62 precursor which is processed by furin at the cell membrane just before virion budding, giving rise to E2-E1 heterodimer. The p62-E1 heterodimer is stable, whereas E2-E1 is unstable and dissociate at low pH. p62 is processed at the last step, presumably to avoid E1 fusion activation before its final export to cell surface. E2 C-terminus contains a transitory transmembrane that would be disrupted by palmitoylation, resulting in reorientation of the C-terminal tail from lumenal to cytoplasmic side. This step is critical since E2 C-terminus is involved in budding by interacting with capsid proteins. This release of E2 C-terminus in cytoplasm occurs lately in protein export, and precludes premature assembly of particles at the endoplasmic reticulum membrane. In terms of biological role, acts as a viroporin that participates in virus glycoprotein processing and transport to the plasma membrane, cell permeabilization and budding of viral particles. Disrupts the calcium homeostasis of the cell, probably at the endoplasmic reticulum level. This leads to cytoplasmic calcium elevation. Because of its lipophilic properties, the 6K protein is postulated to influence the selection of lipids that interact with the transmembrane domains of the glycoproteins, which, in turn, affects the deformability of the bilayer required for the extreme curvature that occurs as budding proceeds. Present in low amount in virions, about 3% compared to viral glycoproteins. Class II viral fusion protein. Fusion activity is inactive as long as E1 is bound to E2 in mature virion. After virus attachment to target cell via host MXRA8 and endocytosis, acidification of the endosome induce dissociation of E1/E2 heterodimer and concomitant trimerization of the E1 subunits. This E1 trimer is fusion active, and promotes release of viral nucleocapsid in cytoplasm after endosome and viral membrane fusion. Efficient fusion requires the presence of cholesterol and sphingolipid in the target membrane. In Mayaro virus (strain Brazil) (MAYV), this protein is Structural polyprotein.